The following is a 177-amino-acid chain: Inner membrane-spanning protein YciB (177 aa).

Transmembrane regions (helical) follow at residues 22–42, 50–70, 76–96, 121–141, and 149–169; these read IFIA…IHWI, ISLF…FFHN, WKIT…QFFT, FIWS…AYYF, and FKVF…SIYI.

This sequence belongs to the YciB family.

It is found in the cell inner membrane. Functionally, plays a role in cell envelope biogenesis, maintenance of cell envelope integrity and membrane homeostasis. This chain is Inner membrane-spanning protein YciB, found in Buchnera aphidicola subsp. Acyrthosiphon pisum (strain APS) (Acyrthosiphon pisum symbiotic bacterium).